The sequence spans 89 residues: MAQQQSEIRYLTPPSVDVKKKKYCRFKKSGIKYIDYKDPEFLKKFLNEQGKILPRRITGTSLKFQRRIAQAVKRARHLALLPFVTDMMK.

Belongs to the bacterial ribosomal protein bS18 family. As to quaternary structure, part of the 30S ribosomal subunit. Forms a tight heterodimer with protein bS6.

In terms of biological role, binds as a heterodimer with protein bS6 to the central domain of the 16S rRNA, where it helps stabilize the platform of the 30S subunit. This is Small ribosomal subunit protein bS18 from Phocaeicola vulgatus (strain ATCC 8482 / DSM 1447 / JCM 5826 / CCUG 4940 / NBRC 14291 / NCTC 11154) (Bacteroides vulgatus).